The chain runs to 276 residues: 2,3,4,5-tetrahydropyridine-2,6-dicarboxylate N-succinyltransferase (276 aa).

Residues arginine 104 and aspartate 141 each contribute to the substrate site.

The protein belongs to the transferase hexapeptide repeat family. Homotrimer.

It is found in the cytoplasm. It catalyses the reaction (S)-2,3,4,5-tetrahydrodipicolinate + succinyl-CoA + H2O = (S)-2-succinylamino-6-oxoheptanedioate + CoA. It functions in the pathway amino-acid biosynthesis; L-lysine biosynthesis via DAP pathway; LL-2,6-diaminopimelate from (S)-tetrahydrodipicolinate (succinylase route): step 1/3. This is 2,3,4,5-tetrahydropyridine-2,6-dicarboxylate N-succinyltransferase from Pseudoalteromonas translucida (strain TAC 125).